The chain runs to 113 residues: Replication initiation control protein YabA (113 aa).

Positions 86, 88, 102, and 105 each coordinate Zn(2+).

Belongs to the YabA family. Homotetramer. Interacts with both DnaA and DnaN, acting as a bridge between these two proteins. Requires Zn(2+) as cofactor.

Its subcellular location is the cytoplasm. The protein resides in the nucleoid. Its function is as follows. Involved in control of chromosome replication initiation. Inhibits the cooperative binding of DnaA to the oriC region, thus negatively regulating initiation of chromosome replication. Inhibits the ability of DnaA-ATP to form a helix on DNA; does not disassemble preformed DnaA-DNA helices. Decreases the residence time of DnaA on the chromosome at its binding sites (oriC, replication forks and promoter-binding sites). Tethers DnaA to the replication machinery via the DNA polymerase beta sliding clamp subunit (dnaN). Associates with oriC and other DnaA targets on the chromosome in a DnaA-dependent manner. This chain is Replication initiation control protein YabA, found in Pediococcus pentosaceus (strain ATCC 25745 / CCUG 21536 / LMG 10740 / 183-1w).